A 361-amino-acid chain; its full sequence is Prostaglandin E2 receptor EP2 subtype (361 aa).

Residues 1-10 (MGSISNNSGS) are compositionally biased toward polar residues. The tract at residues 1–21 (MGSISNNSGSEDCESREWLPS) is disordered. Residues 1-23 (MGSISNNSGSEDCESREWLPSGE) are Extracellular-facing. An N-linked (GlcNAc...) asparagine glycan is attached at N6. A helical membrane pass occupies residues 24-47 (SPAISSAMFSAGVLGNLIALALLA). The Cytoplasmic segment spans residues 48-65 (RRWRGDAGRRAGRGNSIS). The chain crosses the membrane as a helical span at residues 66–91 (LFHVLVTELVFTDLLGTCLISPVVLA). At 92 to 111 (SYARNQTLMALEPERRACTY) the chain is on the extracellular side. The N-linked (GlcNAc...) asparagine glycan is linked to N96. C109 and C187 are oxidised to a cystine. Residues 112–132 (FAFAMTFFSLATMLMLFAMAL) traverse the membrane as a helical segment. Over 133 to 151 (ERYLSIGRPYFYQRHVTRR) the chain is Cytoplasmic. A helical membrane pass occupies residues 152–176 (GGLAVLPTIYTVSLLFCSLPLLGYG). The Extracellular segment spans residues 177–198 (QYVQYCPGTWCFIRHGRTAYLQ). Residues 199 to 223 (LYATLLLLLIVAVLACNFSVILNLI) form a helical membrane-spanning segment. Over 224–262 (RMHRRSGRSRCGPSLGSCRDGSGTRRRGERVSVAEETDH) the chain is Cytoplasmic. The disordered stretch occupies residues 230–253 (GRSRCGPSLGSCRDGSGTRRRGER). The chain crosses the membrane as a helical span at residues 263–286 (LILLAIMTITFAICSLPFTIFAYM). N-linked (GlcNAc...) asparagine glycosylation occurs at N287. At 287-299 (NETSSRREKWDLQ) the chain is on the extracellular side. A helical membrane pass occupies residues 300–323 (ALRFLSINSIIDPWVFAIFRPPVL). The Cytoplasmic segment spans residues 324-361 (RLMRSVLCCRVSLRAQDATQTSCSIQSNASRLTFVDTS).

This sequence belongs to the G-protein coupled receptor 1 family.

It is found in the cell membrane. Its function is as follows. Receptor for prostaglandin E2 (PGE2). The activity of this receptor is mediated by G(s) proteins that stimulate adenylate cyclase. The subsequent raise in intracellular cAMP is responsible for the relaxing effect of this receptor on smooth muscle. In Canis lupus familiaris (Dog), this protein is Prostaglandin E2 receptor EP2 subtype (PTGER2).